A 233-amino-acid chain; its full sequence is Protein DEHYDRATION-INDUCED 19 homolog 2 (233 aa).

Residues 176–215 (DLHSDSSDNNFLLNKFPDDKTAERAEPSLSEKDQKERAQR) form a disordered region. Basic and acidic residues predominate over residues 191–214 (FPDDKTAERAEPSLSEKDQKERAQ).

The protein belongs to the Di19 family.

The protein is Protein DEHYDRATION-INDUCED 19 homolog 2 (DI19-2) of Oryza sativa subsp. japonica (Rice).